The sequence spans 426 residues: MSNVVVMGAQWGDEGKGKIVDLLTRESDVIVRFQGGNNAGHTVLVGEKQYILHLIPSGILHEGKKCLIGNGVVLDPEVFCREIDSLRAQGVDMSPARLMISRKTHLIMPYHKVLDQAREAHKCKDAKIGTTGRGIGPCYEDKSARIGVRAADLAMPELLRSKIEAALVEKNALFTGLYGQQPLDADAVFEEVMAHGAKLVPYLADVSSEIHDAWAEGRSVLFEGAQGTHLDIDHGTYPFVTSSNTVSGNAAAGSGVPPTKLDRIIAIVKAYTTRVGAGPFPTELDDATGEYLQQKGHEFGATTGRKRRCGWLDAVVLRESVRLNGPTDIALTKLDVLSGLKEISICTAYIYRGEQVAYPPQEQNGMAHVTPVYETIPGWDDDITGCTTWESLPAPVKAYVLRIEEITGVRISLVSVGPERDQTIRR.

GTP is bound by residues 12 to 18 (GDEGKGK) and 40 to 42 (GHT). The Proton acceptor role is filled by Asp13. Mg(2+) contacts are provided by Asp13 and Gly40. IMP contacts are provided by residues 13–16 (DEGK), 38–41 (NAGH), Thr131, Arg145, Gln226, Thr241, and Arg305. Catalysis depends on His41, which acts as the Proton donor. 301–307 (ATTGRKR) is a substrate binding site. Residues Arg307, 333–335 (KLD), and 415–417 (SVG) each bind GTP.

The protein belongs to the adenylosuccinate synthetase family. Homodimer. It depends on Mg(2+) as a cofactor.

The protein resides in the cytoplasm. It carries out the reaction IMP + L-aspartate + GTP = N(6)-(1,2-dicarboxyethyl)-AMP + GDP + phosphate + 2 H(+). Its pathway is purine metabolism; AMP biosynthesis via de novo pathway; AMP from IMP: step 1/2. Its function is as follows. Plays an important role in the de novo pathway of purine nucleotide biosynthesis. Catalyzes the first committed step in the biosynthesis of AMP from IMP. In Nitratidesulfovibrio vulgaris (strain ATCC 29579 / DSM 644 / CCUG 34227 / NCIMB 8303 / VKM B-1760 / Hildenborough) (Desulfovibrio vulgaris), this protein is Adenylosuccinate synthetase.